The primary structure comprises 221 residues: Cysteine-rich venom protein (221 aa).

A signal peptide is located at residue Gly1. Residues 21–148 enclose the SCP domain; it reads DLHNSLRRSV…EYKYFYVCQY (128 aa). Intrachain disulfides connect Cys57–Cys135, Cys74–Cys149, Cys130–Cys146, Cys168–Cys175, Cys171–Cys180, Cys184–Cys216, Cys193–Cys210, and Cys201–Cys214. In terms of domain architecture, ShKT spans 184-216; it reads CTHEDKFTNCKDLVKQGCNNNYLKTNCPASCSC.

This sequence belongs to the CRISP family. Expressed by the venom gland.

The protein resides in the secreted. Blocks contraction of smooth muscle elicited by high potassium-induced depolarization, but does not block caffeine-stimulated contraction. May target voltage-gated calcium channels in smooth muscle. The protein is Cysteine-rich venom protein of Vipera nikolskii (Nikolsky's adder).